The primary structure comprises 177 residues: ATP-dependent protease subunit HslV (177 aa).

Residue threonine 6 is part of the active site. 3 residues coordinate Na(+): serine 161, cysteine 164, and threonine 167.

The protein belongs to the peptidase T1B family. HslV subfamily. In terms of assembly, a double ring-shaped homohexamer of HslV is capped on each side by a ring-shaped HslU homohexamer. The assembly of the HslU/HslV complex is dependent on binding of ATP.

Its subcellular location is the cytoplasm. The enzyme catalyses ATP-dependent cleavage of peptide bonds with broad specificity.. With respect to regulation, allosterically activated by HslU binding. In terms of biological role, protease subunit of a proteasome-like degradation complex believed to be a general protein degrading machinery. In Thermodesulfovibrio yellowstonii (strain ATCC 51303 / DSM 11347 / YP87), this protein is ATP-dependent protease subunit HslV.